Here is a 247-residue protein sequence, read N- to C-terminus: Suppressor of silencing P0 (247 aa).

The F-box-like domain occupies 76–95; it reads LPRHLHYECLEWGLLCGTHP.

Belongs to the polerovirus P0 protein family.

Its function is as follows. Suppressor of RNA-mediated gene silencing, also known as post-transcriptional gene silencing (PTGS), a mechanism of plant viral defense that limits the accumulation of viral RNAs. The P0 protein suppresses local PTGS using its F-box-like domain to mediate destabilization and degradation of the AGO1 protein, although not via an interaction with host SKP1A. Participates, together with the proteins P1 and P7, in the inhibition of the induction of aphid-induced host phytohormones. This could play a role in the attraction to the infected plants by aphids. This Potato leafroll virus (strain Potato/Scotland/strain 1/1984) (PLrV) protein is Suppressor of silencing P0.